Here is a 412-residue protein sequence, read N- to C-terminus: Carboxypeptidase B1 (412 aa).

The N-terminal stretch at 1–18 (MIPRIVVVLLSVLAVVTA) is a signal peptide. Residues 19-75 (RRSYEGYKVYGIVPESPDEAEILYQIRQSNPDLDFWHLTKQPGDEARVLVAPKDQRS) constitute a propeptide, activation peptide. The 291-residue stretch at 118-408 (SYLRHNEINE…VGIKAMALKV (291 aa)) folds into the Peptidase M14 domain. Zn(2+) is bound by residues H175 and E178. 175-178 (HARE) contributes to the a peptide binding site. An N-linked (GlcNAc...) asparagine glycan is attached at N205. A peptide is bound by residues R230 and 246–247 (NR). C240 and C263 form a disulfide bridge. H299 lines the Zn(2+) pocket. A peptide-binding positions include 300-301 (SY) and Y351. E374 acts as the Proton donor/acceptor in catalysis. N-linked (GlcNAc...) asparagine glycosylation is present at N395.

This sequence belongs to the peptidase M14 family. Monomer. Interacts with Dengue virus type 2 (DENV2, MY89-88549 strain) envelope protein E. Interacts with Dengue virus envelope protein E type 3, type 2, type 4 and type 1 with decreasing strength. Requires Zn(2+) as cofactor. In terms of tissue distribution, expressed in midgut (at protein level).

The protein localises to the endoplasmic reticulum. It catalyses the reaction Preferential release of a C-terminal lysine or arginine amino acid.. Inhibited by S.tuberosum metallocarboxypeptidase inhibitor. In terms of biological role, carboxypeptidase that preferentially hydrolyzes arginine and lysine residues at the C-terminus. During infection by dengue virus, may play a role in preventing viral packaging, maturation, and release from the midgut. The protein is Carboxypeptidase B1 of Aedes aegypti (Yellowfever mosquito).